The sequence spans 78 residues: MQTAYWMMVMMMVWITAPLSEGGQLNDVIRGLVPDNLAPQLVLQSLDSRRHPHGIRQDGAQICIWKICPPSPWRRLGS.

An N-terminal signal peptide occupies residues 1–22; that stretch reads MQTAYWMMVMMMVWITAPLSEG. Residues 23-56 constitute a propeptide that is removed on maturation; it reads GQLNDVIRGLVPDNLAPQLVLQSLDSRRHPHGIR. Cysteines 63 and 68 form a disulfide. Residue Trp65 is modified to D-tryptophan. Pro69, Pro70, and Pro72 each carry 4-hydroxyproline. Positions 74-78 are excised as a propeptide; that stretch reads RRLGS.

The protein belongs to the conotoxin C superfamily. Consomatin family. As to expression, expressed by the venom duct.

The protein resides in the secreted. Functionally, moderately activates human somatostatin receptors (SSTR) with a preferential activation of SSTR1 and SSTR4. In vivo, does not cause behavioral changes in mice within a few minutes of intracranial injection, but causes a progressive loss of movement thereafter. Four to five hours after injection, mice recover, even with the highest dose tested. Shows antinociception and antihyperalgesia activities in two mouse models of acute pain, most probably by acting outside the central nervous system. This is Consomatin Te1 from Conus terebra (Sea snail).